We begin with the raw amino-acid sequence, 213 residues long: Orotate phosphoribosyltransferase (213 aa).

Residue lysine 26 coordinates 5-phospho-alpha-D-ribose 1-diphosphate. Position 34 to 35 (34 to 35 (FF)) interacts with orotate. Residues 72 to 73 (YK), arginine 99, lysine 100, lysine 103, histidine 105, and 124 to 132 (DDVITAGTA) each bind 5-phospho-alpha-D-ribose 1-diphosphate. Orotate-binding residues include threonine 128 and arginine 156.

The protein belongs to the purine/pyrimidine phosphoribosyltransferase family. PyrE subfamily. As to quaternary structure, homodimer. The cofactor is Mg(2+).

It carries out the reaction orotidine 5'-phosphate + diphosphate = orotate + 5-phospho-alpha-D-ribose 1-diphosphate. It functions in the pathway pyrimidine metabolism; UMP biosynthesis via de novo pathway; UMP from orotate: step 1/2. Functionally, catalyzes the transfer of a ribosyl phosphate group from 5-phosphoribose 1-diphosphate to orotate, leading to the formation of orotidine monophosphate (OMP). The protein is Orotate phosphoribosyltransferase of Edwardsiella ictaluri (strain 93-146).